The sequence spans 386 residues: 26S proteasome non-ATPase regulatory subunit 13 homolog A (386 aa).

N-acetylalanine is present on alanine 2. Positions 173–347 constitute a PCI domain; the sequence is EFSDFYKSAL…GTIYVSWAQP (175 aa).

Belongs to the proteasome subunit S11 family. In terms of assembly, component of the 19S regulatory particle (RP/PA700) lid subcomplex of the 26S proteasome. The 26S proteasome is composed of a core protease (CP), known as the 20S proteasome, capped at one or both ends by the 19S regulatory particle (RP/PA700). The RP/PA700 complex is composed of at least 17 different subunits in two subcomplexes, the base and the lid, which form the portions proximal and distal to the 20S proteolytic core, respectively. As to expression, ubiquitous with highest expression in flowers.

Acts as a regulatory subunit of the 26S proteasome which is involved in the ATP-dependent degradation of ubiquitinated proteins. In Arabidopsis thaliana (Mouse-ear cress), this protein is 26S proteasome non-ATPase regulatory subunit 13 homolog A (RPN9A).